Consider the following 188-residue polypeptide: Sulfopyruvate decarboxylase subunit beta (188 aa).

This sequence belongs to the TPP enzyme family. As to quaternary structure, heterododecamer composed of 6 subunits alpha and 6 subunits beta. Requires thiamine diphosphate as cofactor.

The catalysed reaction is 3-sulfopyruvate + H(+) = sulfoacetaldehyde + CO2. Its pathway is cofactor biosynthesis; coenzyme M biosynthesis; sulfoacetaldehyde from phosphoenolpyruvate and sulfite: step 4/4. Its activity is regulated as follows. Inhibited by oxygen when heated in air at 80 degrees Celsius. The enzyme is reactivated by addition of dithionite. Its function is as follows. Involved in the biosynthesis of the coenzyme M (2-mercaptoethanesulfonic acid). Catalyzes the decarboxylation of sulfopyruvate to sulfoacetaldehyde. This is Sulfopyruvate decarboxylase subunit beta from Methanocaldococcus jannaschii (strain ATCC 43067 / DSM 2661 / JAL-1 / JCM 10045 / NBRC 100440) (Methanococcus jannaschii).